A 968-amino-acid polypeptide reads, in one-letter code: RNA polymerase-associated protein RapA (968 aa).

The Helicase ATP-binding domain maps to 164–334 (DVGRRHAPRV…FARLRLLDPN (171 aa)). Position 177–184 (177–184 (DEVGLGKT)) interacts with ATP. The DEAH box signature appears at 280–283 (DEAH). The Helicase C-terminal domain occupies 490 to 662 (RVEWLMGYLT…YLASPDQTEG (173 aa)).

The protein belongs to the SNF2/RAD54 helicase family. RapA subfamily. In terms of assembly, interacts with the RNAP. Has a higher affinity for the core RNAP than for the holoenzyme. Its ATPase activity is stimulated by binding to RNAP.

Its function is as follows. Transcription regulator that activates transcription by stimulating RNA polymerase (RNAP) recycling in case of stress conditions such as supercoiled DNA or high salt concentrations. Probably acts by releasing the RNAP, when it is trapped or immobilized on tightly supercoiled DNA. Does not activate transcription on linear DNA. Probably not involved in DNA repair. In Shigella flexneri serotype 5b (strain 8401), this protein is RNA polymerase-associated protein RapA.